The chain runs to 90 residues: uncharacterized protein (90 aa).

Transmembrane regions (helical) follow at residues 23-43 (ITTIHLLSSIGAINWGLVGLF) and 48-68 (VTLLFGSFPIIVTIFYIIIGF).

The protein localises to the cell membrane. This is an uncharacterized protein from Rickettsia prowazekii (strain Madrid E).